A 176-amino-acid chain; its full sequence is Nascent polypeptide-associated complex subunit alpha (176 aa).

An NAC-A/B domain is found at 16–80 (PKNEKKAREL…AKVDDMNQRI (65 aa)). Residues 83–110 (AQAAQAAETDAHAGHTHSHGEEDKSPEA) form a disordered region. The span at 91–110 (TDAHAGHTHSHGEEDKSPEA) shows a compositional bias: basic and acidic residues. In terms of domain architecture, UBA spans 138-175 (LDAKDIDIIVEQTQVSRAKAVKALRKHDGDMVNAIMEL).

The protein belongs to the NAC-alpha family. Part of the nascent polypeptide-associated complex (NAC), consisting of EGD2 and EGD1. NAC associates with ribosomes via EGD1.

It is found in the cytoplasm. The protein localises to the nucleus. In terms of biological role, component of the nascent polypeptide-associated complex (NAC), a dynamic component of the ribosomal exit tunnel, protecting the emerging polypeptides from interaction with other cytoplasmic proteins to ensure appropriate nascent protein targeting. The NAC complex also promotes mitochondrial protein import by enhancing productive ribosome interactions with the outer mitochondrial membrane and blocks the inappropriate interaction of ribosomes translating non-secretory nascent polypeptides with translocation sites in the membrane of the endoplasmic reticulum. EGD2 may also be involved in transcription regulation. This chain is Nascent polypeptide-associated complex subunit alpha (EGD2), found in Scheffersomyces stipitis (strain ATCC 58785 / CBS 6054 / NBRC 10063 / NRRL Y-11545) (Yeast).